A 92-amino-acid chain; its full sequence is Small ribosomal subunit protein bS20 (92 aa).

A disordered region spans residues 1 to 24; sequence MANSAQARKRARQAAKANSHNSAL.

It belongs to the bacterial ribosomal protein bS20 family.

Its function is as follows. Binds directly to 16S ribosomal RNA. This chain is Small ribosomal subunit protein bS20, found in Paraburkholderia xenovorans (strain LB400).